The following is an 84-amino-acid chain: MAHKKGVGSSRNGRDSDGQRLGCKKFGGELVKAGNIIYRQRGTQIHPGNNVGCGKDYTLFALIEGVVKFERLGRDRKKVSVYPS.

Residues 1-21 (MAHKKGVGSSRNGRDSDGQRL) form a disordered region.

It belongs to the bacterial ribosomal protein bL27 family.

The polypeptide is Large ribosomal subunit protein bL27 (Trichlorobacter lovleyi (strain ATCC BAA-1151 / DSM 17278 / SZ) (Geobacter lovleyi)).